The following is a 275-amino-acid chain: Ribosomal RNA small subunit methyltransferase A (275 aa).

S-adenosyl-L-methionine contacts are provided by N21, L23, G48, E69, D94, and N115.

The protein belongs to the class I-like SAM-binding methyltransferase superfamily. rRNA adenine N(6)-methyltransferase family. RsmA subfamily.

The protein localises to the cytoplasm. It carries out the reaction adenosine(1518)/adenosine(1519) in 16S rRNA + 4 S-adenosyl-L-methionine = N(6)-dimethyladenosine(1518)/N(6)-dimethyladenosine(1519) in 16S rRNA + 4 S-adenosyl-L-homocysteine + 4 H(+). In terms of biological role, specifically dimethylates two adjacent adenosines (A1518 and A1519) in the loop of a conserved hairpin near the 3'-end of 16S rRNA in the 30S particle. May play a critical role in biogenesis of 30S subunits. The chain is Ribosomal RNA small subunit methyltransferase A from Clostridium botulinum (strain Loch Maree / Type A3).